Consider the following 432-residue polypeptide: ATP-dependent RNA helicase RhlB (432 aa).

The Q motif motif lies at 9–37 (KKFSDFALHPKVIEALEKKGFSNCTQIQA). Residues 40–219 (LPITVKGHDI…FEQMNNPEYV (180 aa)) form the Helicase ATP-binding domain. 53-60 (AQTGTGKT) lines the ATP pocket. The short motif at 165-168 (DEAD) is the DEAD box element. Positions 245–390 (RLLQTLIEEE…VSKYNSDALL (146 aa)) constitute a Helicase C-terminal domain. A disordered region spans residues 393-432 (LPEPKRRHRPRQGQPRRNNSAPRRGNNTQRNNRNKRPSHS). Residues 404-423 (QGQPRRNNSAPRRGNNTQRN) show a composition bias toward low complexity.

The protein belongs to the DEAD box helicase family. RhlB subfamily. Component of the RNA degradosome, which is a multiprotein complex involved in RNA processing and mRNA degradation.

It is found in the cytoplasm. The enzyme catalyses ATP + H2O = ADP + phosphate + H(+). Functionally, DEAD-box RNA helicase involved in RNA degradation. Has RNA-dependent ATPase activity and unwinds double-stranded RNA. The chain is ATP-dependent RNA helicase RhlB from Proteus mirabilis (strain HI4320).